Consider the following 257-residue polypeptide: Mitochondrial distribution and morphology protein 12 (257 aa).

The 256-residue stretch at 1–256 folds into the SMP-LTD domain; that stretch reads MSFEINWEKL…WPSWVNLDFN (256 aa). Residues 74 to 98 are disordered; that stretch reads YEEDNETSSEMHGRDGQNVGESGEE.

This sequence belongs to the MDM12 family. As to quaternary structure, component of the ER-mitochondria encounter structure (ERMES) or MDM complex, composed of MMM1, MDM10, MDM12 and MDM34. An MMM1 homodimer associates with one molecule of MDM12 on each side in a pairwise head-to-tail manner, and the SMP-LTD domains of MMM1 and MDM12 generate a continuous hydrophobic tunnel for phospholipid trafficking.

It localises to the mitochondrion outer membrane. Its subcellular location is the endoplasmic reticulum membrane. Its function is as follows. Component of the ERMES/MDM complex, which serves as a molecular tether to connect the endoplasmic reticulum (ER) and mitochondria. Components of this complex are involved in the control of mitochondrial shape and protein biogenesis, and function in nonvesicular lipid trafficking between the ER and mitochondria. MDM12 is required for the interaction of the ER-resident membrane protein MMM1 and the outer mitochondrial membrane-resident beta-barrel protein MDM10. The MDM12-MMM1 subcomplex functions in the major beta-barrel assembly pathway that is responsible for biogenesis of all mitochondrial outer membrane beta-barrel proteins, and acts in a late step after the SAM complex. The MDM10-MDM12-MMM1 subcomplex further acts in the TOM40-specific pathway after the action of the MDM12-MMM1 complex. Essential for establishing and maintaining the structure of mitochondria and maintenance of mtDNA nucleoids. This Candida glabrata (strain ATCC 2001 / BCRC 20586 / JCM 3761 / NBRC 0622 / NRRL Y-65 / CBS 138) (Yeast) protein is Mitochondrial distribution and morphology protein 12.